Here is a 394-residue protein sequence, read N- to C-terminus: Phosphoglycerate kinase (394 aa).

Substrate-binding positions include 21-23 (DLN), R36, 60-63 (HLGN), R114, and R147. ATP-binding positions include K198, E315, and 341-344 (GGET).

This sequence belongs to the phosphoglycerate kinase family. As to quaternary structure, monomer.

Its subcellular location is the cytoplasm. It catalyses the reaction (2R)-3-phosphoglycerate + ATP = (2R)-3-phospho-glyceroyl phosphate + ADP. It participates in carbohydrate degradation; glycolysis; pyruvate from D-glyceraldehyde 3-phosphate: step 2/5. In Wigglesworthia glossinidia brevipalpis, this protein is Phosphoglycerate kinase.